The primary structure comprises 238 residues: Glycerol uptake facilitator protein 4 (238 aa).

2 helical membrane-spanning segments follow: residues 2 to 22 (IHQL…GVGV) and 39 to 59 (IFAI…FGNV). Residues 62 to 64 (NPA) carry the NPA 1 motif. The next 3 membrane-spanning stretches (helical) occupy residues 80 to 100 (FIPY…IVWI), 135 to 155 (FFVE…ISEV), and 158 to 178 (PGIV…GLGG). The NPA 2 motif lies at 185-187 (NLA). The helical transmembrane segment at 211 to 231 (YGIIVPGIAPFVGAACAALFM) threads the bilayer.

It belongs to the MIP/aquaporin (TC 1.A.8) family.

It is found in the cell membrane. Functionally, transporter that facilitates the transmembrane diffusion of water, dihydroxyacetone, glycerol, urea, H(2)O(2) and D/L-lactic acid. Is involved in the cellular racemization of lactate and lactate metabolism, but has likely a more general physiological role. The transported molecule is indeed lactic acid and not the lactate anion, in agreement with the assumption that, with very few exceptions, MIPs (major intrinsic proteins) only facilitate the transport of uncharged solutes. The sequence is that of Glycerol uptake facilitator protein 4 from Lactiplantibacillus plantarum (strain ATCC BAA-793 / NCIMB 8826 / WCFS1) (Lactobacillus plantarum).